A 104-amino-acid polypeptide reads, in one-letter code: uncharacterized protein (104 aa).

An N-terminal signal peptide occupies residues 1-25 (MVSSFFMASTLLAISSCFNSSISRA). The helical transmembrane segment at 79 to 99 (IPVVIVVEISSTLVLLLSAFL) threads the bilayer.

Its subcellular location is the membrane. This is an uncharacterized protein from Saccharomyces cerevisiae (strain ATCC 204508 / S288c) (Baker's yeast).